A 561-amino-acid chain; its full sequence is Amidophosphoribosyltransferase 2, chloroplastic (561 aa).

The segment covering 1–27 has biased composition (low complexity); it reads MAATSSISSSLSLNAKPNKLSNNNNNN. Residues 1 to 36 form a disordered region; the sequence is MAATSSISSSLSLNAKPNKLSNNNNNNKPHRFLRNP. The N-terminal 53 residues, 1-53, are a transit peptide targeting the chloroplast; sequence MAATSSISSSLSLNAKPNKLSNNNNNNKPHRFLRNPFLNPSSSSFSPLPASIS. The active-site Nucleophile is the C87. One can recognise a Glutamine amidotransferase type-2 domain in the interval 87–307; that stretch reads CGVVGIYGDS…PGEVLVVDKD (221 aa). 4 residues coordinate [4Fe-4S] cluster: C323, C469, C520, and C523.

In the C-terminal section; belongs to the purine/pyrimidine phosphoribosyltransferase family. [4Fe-4S] cluster is required as a cofactor. Mg(2+) serves as cofactor. In terms of tissue distribution, mostly expressed in leaves, and, to a lower extent, in cotyledons.

The protein localises to the plastid. It localises to the chloroplast stroma. It carries out the reaction 5-phospho-beta-D-ribosylamine + L-glutamate + diphosphate = 5-phospho-alpha-D-ribose 1-diphosphate + L-glutamine + H2O. It participates in purine metabolism; IMP biosynthesis via de novo pathway; N(1)-(5-phospho-D-ribosyl)glycinamide from 5-phospho-alpha-D-ribose 1-diphosphate: step 1/2. Inhibited by the phenyltriazole acetic acid compound [5-(4-chlorophenyl)-1-isopropyl-1H-[1,2,4]triazol-3-yl]-acetic acid (DAS734), a bleaching herbicide. Catalyzes the first committed step of 'de novo purine biosynthesis from glutamine. Required for chloroplast biogenesis and cell division. Confers sensitivity to the phenyltriazole acetic acid compound [5-(4-chlorophenyl)-1-isopropyl-1H-[1,2,4]triazol-3-yl]-acetic acid (DAS734), a bleaching herbicide. The protein is Amidophosphoribosyltransferase 2, chloroplastic (ASE2) of Arabidopsis thaliana (Mouse-ear cress).